Consider the following 308-residue polypeptide: D-alanine--D-alanine ligase (308 aa).

In terms of domain architecture, ATP-grasp spans 108–303 (KLVWKAAGLP…YEALCLKVLE (196 aa)). 134 to 189 (EAELGLPMFVKPACEGSSLGVTKVRKAGELAQAYAEARKFDPLVLAEQFVGGGEYT) contacts ATP. Mg(2+) contacts are provided by D257, E270, and N272.

Belongs to the D-alanine--D-alanine ligase family. It depends on Mg(2+) as a cofactor. The cofactor is Mn(2+).

It localises to the cytoplasm. It catalyses the reaction 2 D-alanine + ATP = D-alanyl-D-alanine + ADP + phosphate + H(+). It functions in the pathway cell wall biogenesis; peptidoglycan biosynthesis. Cell wall formation. The sequence is that of D-alanine--D-alanine ligase from Laribacter hongkongensis (strain HLHK9).